Consider the following 89-residue polypeptide: UPF0297 protein MGAS9429_Spy1808 (89 aa).

Belongs to the UPF0297 family.

This is UPF0297 protein MGAS9429_Spy1808 from Streptococcus pyogenes serotype M12 (strain MGAS9429).